We begin with the raw amino-acid sequence, 313 residues long: Thymidylate synthase (313 aa).

The interval 1–28 is disordered; it reads MPVAGSELPRRPLPPAAQERDAEPRPPH. The span at 18–28 shows a compositional bias: basic and acidic residues; sequence QERDAEPRPPH. Residue Arg-50 coordinates dUMP. Ser-114 is modified (phosphoserine). DUMP contacts are provided by residues 175–176, 195–196, 215–218, Asn-226, and 256–258; these read RR, CH, RSGD, and HIY. The active-site Nucleophile is Cys-195. Residue Asp-218 participates in (6R)-5,10-methylene-5,6,7,8-tetrahydrofolate binding. Glycyl lysine isopeptide (Lys-Gly) (interchain with G-Cter in SUMO2) cross-links involve residues Lys-287, Lys-292, and Lys-308. (6R)-5,10-methylene-5,6,7,8-tetrahydrofolate is bound at residue Ala-312.

Belongs to the thymidylate synthase family. Homodimer.

The protein localises to the nucleus. Its subcellular location is the cytoplasm. It localises to the mitochondrion. The protein resides in the mitochondrion matrix. It is found in the mitochondrion inner membrane. The enzyme catalyses dUMP + (6R)-5,10-methylene-5,6,7,8-tetrahydrofolate = 7,8-dihydrofolate + dTMP. It functions in the pathway pyrimidine metabolism; dTTP biosynthesis. In terms of biological role, catalyzes the reductive methylation of 2'-deoxyuridine 5'-monophosphate (dUMP) to thymidine 5'-monophosphate (dTMP), using the cosubstrate, 5,10- methylenetetrahydrofolate (CH2H4folate) as a 1-carbon donor and reductant and contributes to the de novo mitochondrial thymidylate biosynthesis pathway. The sequence is that of Thymidylate synthase from Homo sapiens (Human).